The primary structure comprises 95 residues: Small ribosomal subunit protein bS6 (95 aa).

This sequence belongs to the bacterial ribosomal protein bS6 family.

Functionally, binds together with bS18 to 16S ribosomal RNA. This Desulforamulus reducens (strain ATCC BAA-1160 / DSM 100696 / MI-1) (Desulfotomaculum reducens) protein is Small ribosomal subunit protein bS6.